The chain runs to 180 residues: UPF0340 protein RBAM_034070 (180 aa).

It belongs to the UPF0340 family.

The polypeptide is UPF0340 protein RBAM_034070 (Bacillus velezensis (strain DSM 23117 / BGSC 10A6 / LMG 26770 / FZB42) (Bacillus amyloliquefaciens subsp. plantarum)).